Reading from the N-terminus, the 947-residue chain is MLQRAASNAYSWWWASHIRTKQSKWLEHNLQDMEEKVEYTLKIIDEDGDTFAKRAEMYYRKRPEIVNFVEEAFRSYRALAERYDHLSRELQSANRTIATAFPEHVQFPLEDDSDENEDYDGRPRKPPKHLHLIPKGINIPEVPDIPKKKDFRSQSMMLSRKGPADLKRNVSSAQAKREAAIVRSGLSKEEGLEEIDKLQKGILALQTEKEFVRSSYEESYERYWDLENEVTEMQKSVCNLQDEFGLGASIDDSDARTLMASTALSSCRDTLAKLEEKQKISIEEAEIEKGRITTAKERFYALRNKFEKPESDVLDEVIRTDEEEEDVVQESSYESEREDSNENLTVVKLAEKIDDLVHRVVSLETNASSHTALVKTLRSETDELHEHIRGLEEDKAALVSDATVMKQRITVLEDELRNVRKLFQKVEDQNKNLQNQFKVANRTVDDLSGKIQDVKMDEDVEGAGIFQELPVVSGSEDSRDDLKSVSTEKTKKDVIAVKESEDGERAQEEKPEIKDSFALSETASTCFGTEAEDLVTEDEDEETPNWRHLLPDGMEDREKVLLDEYTSVLRDYREVKRKLGDVEKKNREGFFELALQLRELKNAVAYKDVEIQSLRQKLDTTGKDSPHQGEGNNQLEHEQGHHETVSISPTSNFSVATTPHHQVGDVKRTPGRTKSTEVRVKFADVDDSPRTKIPTVEDKVRADIDAVLEENLEFWLRFSTSVHQIQKYQTTVQDLKSELSKLRIESKQQQESPRSSSNTAVASEAKPIYRHLREIRTELQLWLENSAVLKDELQGRYASLANIQEEIARVTAQSGGNKVSDSEISGYQAAKFHGEILNMKQENKRVSTELHSGLDRVRALKTEVERILSKLEEDLGISSATEARTTPSKSSSSGRPRIPLRSFLFGVKLKKNRQQKQSASSLFSCVSPSPGLHKQSSYSRPPGKLPE.

The region spanning tyrosine 10–leucine 90 is the NAB domain. Positions valine 105–histidine 131 are disordered. Residues leucine 109–aspartate 118 are compositionally biased toward acidic residues. Coiled-coil stretches lie at residues lysine 348–valine 454 and valine 568–aspartate 619. Basic and acidic residues-rich tracts occupy residues leucine 618–histidine 627 and leucine 635–threonine 644. 3 disordered regions span residues leucine 618–serine 675, arginine 743–serine 763, and lysine 911–glutamate 947. A compositionally biased stretch (polar residues) spans valine 645–histidine 660. Over residues glutamine 662–serine 675 the composition is skewed to basic and acidic residues. Positions valine 722 to arginine 809 form a coiled coil. Polar residues-rich tracts occupy residues glutamine 749–valine 761 and glutamine 915–serine 927.

This sequence belongs to the NET family. In terms of tissue distribution, expressed specifically in pollen.

It is found in the cell membrane. Plant-specific actin binding protein. Associates with F-actin at the plasma membrane in growing pollen tubes. May be part of a membrane-cytoskeletal adapter complex. This chain is Protein NETWORKED 2A, found in Arabidopsis thaliana (Mouse-ear cress).